The sequence spans 152 residues: Small ribosomal subunit protein uS13 (152 aa).

Positions 133–152 (GQHTKTTGRRGRTVGVSKKK) are disordered.

This sequence belongs to the universal ribosomal protein uS13 family.

It is found in the cytoplasm. Functionally, located at the top of the head of the 40S subunit, it contacts several helices of the 18S rRNA. The protein is Small ribosomal subunit protein uS13 (RpS18) of Spodoptera frugiperda (Fall armyworm).